A 35-amino-acid polypeptide reads, in one-letter code: MIEPLLCGIVLGLIPVTLTGLFVAAWNQYRRGSAL.

A helical membrane pass occupies residues 5-25 (LLCGIVLGLIPVTLTGLFVAA).

It belongs to the PetG family. As to quaternary structure, the 4 large subunits of the cytochrome b6-f complex are cytochrome b6, subunit IV (17 kDa polypeptide, PetD), cytochrome f and the Rieske protein, while the 4 small subunits are PetG, PetL, PetM and PetN. The complex functions as a dimer.

It is found in the plastid. The protein resides in the organellar chromatophore thylakoid membrane. Component of the cytochrome b6-f complex, which mediates electron transfer between photosystem II (PSII) and photosystem I (PSI), cyclic electron flow around PSI, and state transitions. PetG is required for either the stability or assembly of the cytochrome b6-f complex. The chain is Cytochrome b6-f complex subunit 5 from Paulinella chromatophora.